Here is a 205-residue protein sequence, read N- to C-terminus: EFADNLDSDFKVRQFLAKELAKASVSRIVIERPAKSIRVTIHTARPGIVIGKKGEDVEKLRKVVADIAGVPAQINIAEVRKPELDAKLVADSITSQLERRVMFRRAMKRAVQNAMRLGAKGIKVDVSGRLGGAEIARTEWYREGRVPLHTLRADIDYNTSEAHTTYGVIGVKVWIFKGEILGGMAAVEQPEPAAQPKKQQRKGRK.

The KH type-2 domain maps to 12 to 80 (VRQFLAKELA…PAQINIAEVR (69 aa)).

It belongs to the universal ribosomal protein uS3 family. Part of the 30S ribosomal subunit. Forms a tight complex with proteins S10 and S14.

Functionally, binds the lower part of the 30S subunit head. Binds mRNA in the 70S ribosome, positioning it for translation. The polypeptide is Small ribosomal subunit protein uS3 (Buchnera aphidicola subsp. Acyrthosiphon kondoi (Acyrthosiphon kondoi symbiotic bacterium)).